A 93-amino-acid chain; its full sequence is Protein FptB (93 aa).

A signal peptide spans 1–25 (MPRQSGFGWAWRVPLALAGSLAAAT). 2 helical membrane passes run 44-64 (LYAG…GGLL) and 71-91 (FAWR…LLAG).

It is found in the cell membrane. Its function is as follows. May play some role in transport of Fe(3+)-pyochelin. This chain is Protein FptB (fptB), found in Pseudomonas aeruginosa (strain ATCC 15692 / DSM 22644 / CIP 104116 / JCM 14847 / LMG 12228 / 1C / PRS 101 / PAO1).